The sequence spans 472 residues: MVPMNPELMHYPNQPHMMPGYPMINAYQQSYLQNPAQWTPEMLLCMQMQMQQMVPGTATNSTYMPPQSKNTVTPNATSPLSQISDRDSGNDTISPPLTSQNSATTPNYHNQPQMQLTPLQQAKPEKEEISPYAINNILSSTQSSPDNGNEADDKENSSVRRNTFPASSASTKKPRGTPYDRTNTPMTVVPQMPQFAPDFSNYNLTMNAWSEFFKKDRCMVCGDNSTGYHYGVQSCEGCKGFFRRSVHKNIAYVCTKGENCTFSYENCAANRGVRTRCQACRFAKCLAVGMNRDNVRVNKETDKDVKPSVASPNFEMTSQVKELTAAFVANMPCSTHLTSGTHAIGAIKKFIESVPALSSLLPKDEKALEMSIQKVMSGILAIRAAFTFDPITFYSCENPVNLLRGGIRNTVFNDCEVALLSGIHILQIVNGGVAEIFTSYCQGLRHQLSQTHLQEIGLCDRLLMRLGPYLNQ.

Polar residues-rich tracts occupy residues 57–83, 90–112, 138–147, and 159–171; these read TATN…LSQI, NDTI…HNQP, LSSTQSSPDN, and VRRN…SAST. Disordered stretches follow at residues 57-112 and 138-184; these read TATN…HNQP and LSST…RTNT. A DNA-binding region (nuclear receptor) is located at residues 215 to 297; sequence KDRCMVCGDN…VGMNRDNVRV (83 aa). 2 consecutive NR C4-type zinc fingers follow at residues 218-238 and 267-285; these read CMVC…CEGC and CAAN…FAKC.

This sequence belongs to the nuclear hormone receptor family.

The protein localises to the nucleus. Orphan nuclear receptor. In Caenorhabditis elegans, this protein is Nuclear hormone receptor family member nhr-2 (nhr-2).